The chain runs to 166 residues: Large ribosomal subunit protein uL10 (166 aa).

It belongs to the universal ribosomal protein uL10 family. Part of the ribosomal stalk of the 50S ribosomal subunit. The N-terminus interacts with L11 and the large rRNA to form the base of the stalk. The C-terminus forms an elongated spine to which L12 dimers bind in a sequential fashion forming a multimeric L10(L12)X complex.

In terms of biological role, forms part of the ribosomal stalk, playing a central role in the interaction of the ribosome with GTP-bound translation factors. This is Large ribosomal subunit protein uL10 from Streptococcus pneumoniae (strain 70585).